The following is a 217-amino-acid chain: Elongation factor Ts (217 aa).

Residues 82–85 (TDFV) are involved in Mg(2+) ion dislocation from EF-Tu.

It belongs to the EF-Ts family.

It is found in the cytoplasm. Associates with the EF-Tu.GDP complex and induces the exchange of GDP to GTP. It remains bound to the aminoacyl-tRNA.EF-Tu.GTP complex up to the GTP hydrolysis stage on the ribosome. The sequence is that of Elongation factor Ts from Desulfitobacterium hafniense (strain DSM 10664 / DCB-2).